We begin with the raw amino-acid sequence, 316 residues long: MASRDFLGRFGGEKGSSSDKAGGGAGEPDEVVELSLGLSLGGCFGANSGRDAKKPRLVRSSSLAAMYSLPGTSDDLAAATPPPAPLMRTSSLPTETEEERWRRREMQSLKRLQAKRKRLERRTSMNSGKSGGSSSRDDAQEPLYPSAFQLRRSVVDQGNTSSSMPEQGSADGAEAKSTSSMEISSDNNNNNNASNQNKSLPPPAPSPAGKLPNGIVKEQPPLRTLRSLTMRTTSTGDLRKSMMEDMPMVSSKVDGPNGKKIDGFLYKYRKGEEVRIVCVCHGNFLTPAEFVKHAGGGDVTNPLRHIVVNPAPSVFL.

Disordered regions lie at residues 1–29 (MASRDFLGRFGGEKGSSSDKAGGGAGEPD) and 72–236 (TSDD…TSTG). Residues 99 to 108 (ERWRRREMQS) show a composition bias toward basic and acidic residues. A compositionally biased stretch (polar residues) spans 156–166 (DQGNTSSSMPE). 2 stretches are compositionally biased toward low complexity: residues 179-199 (SSMEISSDNNNNNNASNQNKS) and 222-235 (LRTLRSLTMRTTST).

It belongs to the Ninja family.

The protein localises to the nucleus. The protein is Ninja-family protein 2 (AFP-B1) of Triticum aestivum (Wheat).